Here is an 811-residue protein sequence, read N- to C-terminus: Myb-like DNA-binding protein BAS1 (811 aa).

The region spanning histidine 34–leucine 110 is the Myb-like domain. HTH myb-type domains follow at residues aspartate 111–serine 165 and lysine 166–valine 218. 2 DNA-binding regions (H-T-H motif) span residues tryptophan 138–leucine 161 and tryptophan 191–isoleucine 214. A compositionally biased stretch (basic and acidic residues) spans aspartate 237–glutamine 264. Disordered regions lie at residues aspartate 237–proline 320, serine 348–methionine 379, alanine 535–glutamate 713, and leucine 782–serine 811. Low complexity predominate over residues leucine 265 to leucine 275. Over residues asparagine 282–aspartate 298 the composition is skewed to basic and acidic residues. 3 stretches are compositionally biased toward polar residues: residues serine 348 to leucine 366, alanine 535 to serine 613, and leucine 653 to glycine 664. Over residues leucine 782 to methionine 794 the composition is skewed to basic and acidic residues.

Monomer.

The protein localises to the nucleus. In terms of biological role, activates HIS4 transcription only in combination with PHO2/BAS2. BAS1 is also involved in the regulation of the purine biosynthesis pathway. In Saccharomyces cerevisiae (strain ATCC 204508 / S288c) (Baker's yeast), this protein is Myb-like DNA-binding protein BAS1 (BAS1).